The following is a 220-amino-acid chain: Iron-sulfur cluster repair protein YtfE (220 aa).

This sequence belongs to the RIC family. YtfE subfamily. Homodimer.

It is found in the cytoplasm. Its function is as follows. Di-iron-containing protein involved in the repair of iron-sulfur clusters damaged by oxidative and nitrosative stress conditions. The chain is Iron-sulfur cluster repair protein YtfE from Salmonella schwarzengrund (strain CVM19633).